The following is a 314-amino-acid chain: Beta-lactamase (314 aa).

The tat-type signal signal peptide spans M1–R39. Residues T31–E50 form a disordered region. The active-site Acyl-ester intermediate is the S89. Position 259–261 (K259–G261) interacts with substrate.

This sequence belongs to the class-A beta-lactamase family. In terms of processing, predicted to be exported by the Tat system. The position of the signal peptide cleavage has been experimentally proven.

It carries out the reaction a beta-lactam + H2O = a substituted beta-amino acid. This is Beta-lactamase from Streptomyces albus G.